We begin with the raw amino-acid sequence, 468 residues long: 6-phospho-beta-galactosidase (468 aa).

D-galactose 6-phosphate-binding residues include glutamine 19, histidine 116, asparagine 159, glutamate 160, and asparagine 297. The Proton donor role is filled by glutamate 160. The active-site Nucleophile is glutamate 375. D-galactose 6-phosphate-binding residues include serine 428, tryptophan 429, lysine 435, and tyrosine 437.

This sequence belongs to the glycosyl hydrolase 1 family.

The enzyme catalyses a 6-phospho-beta-D-galactoside + H2O = D-galactose 6-phosphate + an alcohol. Its pathway is carbohydrate metabolism; lactose degradation; D-galactose 6-phosphate and beta-D-glucose from lactose 6-phosphate: step 1/1. The sequence is that of 6-phospho-beta-galactosidase from Streptococcus pyogenes serotype M3 (strain ATCC BAA-595 / MGAS315).